The chain runs to 114 residues: FK506-binding protein 1 (114 aa).

One can recognise a PPIase FKBP-type domain in the interval 26-114 (GDLVTIHYTG…IFDVELLKVN (89 aa)).

This sequence belongs to the FKBP-type PPIase family. FKBP1 subfamily.

It localises to the cytoplasm. It carries out the reaction [protein]-peptidylproline (omega=180) = [protein]-peptidylproline (omega=0). Its activity is regulated as follows. Inhibited by both FK506 and rapamycin. PPIases accelerate the folding of proteins. It catalyzes the cis-trans isomerization of proline imidic peptide bonds in oligopeptides. The polypeptide is FK506-binding protein 1 (FPR1) (Candida glabrata (strain ATCC 2001 / BCRC 20586 / JCM 3761 / NBRC 0622 / NRRL Y-65 / CBS 138) (Yeast)).